The primary structure comprises 431 residues: NADH-quinone oxidoreductase subunit D 2 (431 aa).

A disordered region spans residues 1-27 (MNDHKGLGGLDTEATPGSFGAGEPPRA).

It belongs to the complex I 49 kDa subunit family. In terms of assembly, NDH-1 is composed of 14 different subunits. Subunits NuoB, C, D, E, F, and G constitute the peripheral sector of the complex.

Its subcellular location is the cell inner membrane. The enzyme catalyses a quinone + NADH + 5 H(+)(in) = a quinol + NAD(+) + 4 H(+)(out). Functionally, NDH-1 shuttles electrons from NADH, via FMN and iron-sulfur (Fe-S) centers, to quinones in the respiratory chain. The immediate electron acceptor for the enzyme in this species is believed to be ubiquinone. Couples the redox reaction to proton translocation (for every two electrons transferred, four hydrogen ions are translocated across the cytoplasmic membrane), and thus conserves the redox energy in a proton gradient. This Anaeromyxobacter sp. (strain Fw109-5) protein is NADH-quinone oxidoreductase subunit D 2.